We begin with the raw amino-acid sequence, 502 residues long: Zinc finger C3HC-type protein 1 (502 aa).

The residue at position 2 (Ala-2) is an N-acetylalanine. The residue at position 24 (Ser-24) is a Phosphoserine. Thr-28 bears the Phosphothreonine mark. Residues Ile-36 to Thr-73 are disordered. Over residues Thr-52–Ser-72 the composition is skewed to polar residues. Residues Ser-58 and Ser-62 each carry the phosphoserine modification. Thr-84 bears the Phosphothreonine mark. A C3HC-type zinc finger spans residues Cys-102 to Cys-156. The tract at residues Leu-170–Thr-210 is F-box-like. Residues Ser-302–Ser-423 are disordered. Ser-321 and Ser-329 each carry phosphoserine. Polar residues predominate over residues Thr-327–Ser-338. Position 333 is a phosphothreonine (Thr-333). 6 positions are modified to phosphoserine: Ser-335, Ser-338, Ser-344, Ser-354, Ser-359, and Ser-370. Residues Arg-351 to Pro-360 are compositionally biased toward polar residues. Positions Pro-371–Arg-380 are enriched in low complexity. Phosphoserine is present on Ser-381. Phosphothreonine is present on residues Thr-384 and Thr-387. At Ser-395 the chain carries Phosphoserine. A Nuclear localization signal motif is present at residues Pro-396–Arg-402. Phosphoserine is present on residues Ser-407 and Ser-483. Over residues Ser-407–Thr-422 the composition is skewed to low complexity.

In terms of assembly, interacts with TPR; this interaction mediates ZC3HC1 nuclear envelopes (NE)-association but also required for proper positioning of a substantial amount of TPR at the nuclear basket (NB). In terms of processing, phosphorylated. May also be weakly phosphorylated on Tyr residues. In terms of tissue distribution, widely expressed. Highly expressed in heart, skeletal muscle and testis. Expressed in brain, placenta, lung, kidney, liver, pancreas, spleen, thymus, prostate, ovary small intestine and colon. Weakly or not expressed in leukocytes.

Its subcellular location is the nucleus. The protein localises to the nucleus envelope. Its function is as follows. Required for proper positioning of a substantial amount of TPR at the nuclear basket (NB) through interaction with TPR. In Homo sapiens (Human), this protein is Zinc finger C3HC-type protein 1.